The primary structure comprises 178 residues: Peptidyl-prolyl cis-trans isomerase H (178 aa).

One can recognise a PPIase cyclophilin-type domain in the interval 14 to 177; that stretch reads FFDISIGDVP…LPVKITECGQ (164 aa).

It belongs to the cyclophilin-type PPIase family. PPIase H subfamily.

It is found in the nucleus. The catalysed reaction is [protein]-peptidylproline (omega=180) = [protein]-peptidylproline (omega=0). Functionally, PPIases accelerate the folding of proteins. It catalyzes the cis-trans isomerization of proline imidic peptide bonds in oligopeptides. The sequence is that of Peptidyl-prolyl cis-trans isomerase H (cyp7) from Rhizopus delemar (strain RA 99-880 / ATCC MYA-4621 / FGSC 9543 / NRRL 43880) (Mucormycosis agent).